The sequence spans 572 residues: M-phase inducer phosphatase 3 (572 aa).

Disordered stretches follow at residues 95–117 (NLGD…GKLE) and 304–354 (SPSM…QRRG). Positions 420–527 (LVEKFFIIDC…FFPEYKELCE (108 aa)) constitute a Rhodanese domain. C476 is a catalytic residue.

The protein belongs to the MPI phosphatase family.

The catalysed reaction is O-phospho-L-tyrosyl-[protein] + H2O = L-tyrosyl-[protein] + phosphate. Its function is as follows. This protein functions as a dosage-dependent inducer in mitotic control. It is a tyrosine protein phosphatase required for progression of the cell cycle. It may directly dephosphorylate p34(cdc2) and activate the p34(cdc2) kinase activity. This is M-phase inducer phosphatase 3 (cdc25-3) from Xenopus laevis (African clawed frog).